A 483-amino-acid polypeptide reads, in one-letter code: Protein PLASTID TRANSCRIPTIONALLY ACTIVE 14 (483 aa).

The transit peptide at Met-1–Pro-62 directs the protein to the chloroplast. The SET domain occupies Tyr-80 to Met-325. An S-adenosyl-L-methionine-binding site is contributed by Tyr-324.

Belongs to the class V-like SAM-binding methyltransferase superfamily. Component of the transcriptionally active chromosome (TAC) complexes. Interacts with PTAC12/HMR/PAP5 and PTAC7. Binds to SL1/MTERF3. As to expression, mostly expressed in leaves, flowers and seedlings, and, to a lower extent, in stems and roots.

It is found in the plastid. Its subcellular location is the chloroplast thylakoid. In terms of biological role, essential for chloroplast development, especially for thylakoid formation. Involved in plastid gene expression, probably by maintaining plastid-encoded RNA polymerase (PEP) activity. This chain is Protein PLASTID TRANSCRIPTIONALLY ACTIVE 14, found in Arabidopsis thaliana (Mouse-ear cress).